The sequence spans 576 residues: Colicin-E7 (576 aa).

Disordered regions lie at residues 1-75 (MSGG…GGGS), 421-478 (SSAL…PVPD), and 506-557 (DPEL…GVYD). Positions 19–35 (NINGGPTGLGGNGGASD) are enriched in gly residues. The segment covering 36-45 (GSGWSSENNP) has biased composition (low complexity). The span at 46–75 (WGGGSGSGVHWGGGSGHGNGGGNSNSGGGS) shows a compositional bias: gly residues. Composition is skewed to basic and acidic residues over residues 424-447 (LERRKQKENKEKDAKAKLDKESKR) and 535-548 (SGKRTSFELHHEKP). The Zn(2+) site is built by H544, H569, and H573.

It belongs to the colicin/pyosin nuclease family.

Its function is as follows. This plasmid-coded bactericidal protein is an endonuclease active on both single- and double-stranded DNA but with undefined specificity. Colicins are polypeptide toxins produced by and active against E.coli and closely related bacteria. This chain is Colicin-E7 (colE7), found in Escherichia coli.